The sequence spans 271 residues: MRWTKEELDRYHRQMILPQVGPEGQERLKRASVVVVGAGGLGVPVLQYLVAAGVGRVGVVEMDRVEVSNLHRQVLYTTEDVGEPKALVAQKRLQALNPLVRVEAYPVRLTSENALEILRPYDLVVDASDNFPTRYLVNDAAVLLGKPLVFGAIYQFDGQVAVFHHPTLHGEMGPCYRCLFPKPPPPGAVPSCAEAGVFGVLPAVVGSLMAAEALKVLLGIGKPLAGHLLLYDALEASFRKLTVRRNPRCPVCGDEPTQRELVDYEAFCGLR.

ATP-binding positions include arginine 13, glycine 40, glutamate 61, arginine 72, lysine 85, leucine 109, and 129-133 (DNFPT). The Zn(2+) site is built by cysteine 175 and cysteine 178. Cysteine 192 is covalently cross-linked (Glycyl cysteine thioester (Cys-Gly) (interchain with G-Cter in TtuB)). Positions 249 and 252 each coordinate Zn(2+).

It belongs to the HesA/MoeB/ThiF family. Zn(2+) serves as cofactor. In terms of processing, conjugated to TtuB via a covalent linkage that likely involves a lysine residue. Is able to form a covalent thioester adduct with TtuB via Cys-192 in vitro.

The enzyme catalyses [molybdopterin-synthase sulfur-carrier protein]-C-terminal Gly-Gly + ATP + H(+) = [molybdopterin-synthase sulfur-carrier protein]-C-terminal Gly-Gly-AMP + diphosphate. It catalyses the reaction [ThiS sulfur-carrier protein]-C-terminal Gly-Gly + ATP + H(+) = [ThiS sulfur-carrier protein]-C-terminal Gly-Gly-AMP + diphosphate. The catalysed reaction is [TtuB sulfur-carrier protein]-C-terminal Gly-Gly + ATP + H(+) = [TtuB sulfur-carrier protein]-C-terminal Gly-Gly-AMP + diphosphate. It participates in tRNA modification. It functions in the pathway cofactor biosynthesis; thiamine diphosphate biosynthesis. The protein operates within cofactor biosynthesis; molybdopterin biosynthesis. Its activity is regulated as follows. Enzymatic activity may be regulated by TtuB conjugation. In terms of biological role, adenylyltransferase involved in the biosynthesis of several sulfur compounds. Is required for the 2-thiolation of 5-methyluridine residue at position 54 in the T loop of tRNAs, leading to 5-methyl-2-thiouridine (m(5)s(2)U or s(2)T). This modification allows thermal stabilization of tRNAs in thermophilic microorganisms, and is essential for cell growth at high temperatures. TtuC catalyzes the adenylation by ATP of the carboxyl group of the C-terminal glycine of sulfur carrier protein TtuB. Is also involved in the biosynthesis of thiamine, molybdenum cofactor (Moco) and probably tungsten cofactor (Wco), by adenylating the sulfur carriers ThiS and MoaD. Is required for the conjugation of TtuB to target proteins. The protein is Sulfur carrier protein adenylyltransferase of Thermus thermophilus (strain ATCC BAA-163 / DSM 7039 / HB27).